The sequence spans 341 residues: Holliday junction branch migration complex subunit RuvB (341 aa).

The tract at residues methionine 1–alanine 21 is disordered. Residues proline 4–tyrosine 183 are large ATPase domain (RuvB-L). ATP contacts are provided by residues leucine 22, arginine 23, glycine 64, lysine 67, threonine 68, threonine 69, glutamate 130 to phenylalanine 132, arginine 173, tyrosine 183, and arginine 220. A Mg(2+)-binding site is contributed by threonine 68. The segment at threonine 184 to glycine 254 is small ATPAse domain (RuvB-S). Positions histidine 257–glutamate 341 are head domain (RuvB-H). Positions 293, 312, and 317 each coordinate DNA.

Belongs to the RuvB family. In terms of assembly, homohexamer. Forms an RuvA(8)-RuvB(12)-Holliday junction (HJ) complex. HJ DNA is sandwiched between 2 RuvA tetramers; dsDNA enters through RuvA and exits via RuvB. An RuvB hexamer assembles on each DNA strand where it exits the tetramer. Each RuvB hexamer is contacted by two RuvA subunits (via domain III) on 2 adjacent RuvB subunits; this complex drives branch migration. In the full resolvosome a probable DNA-RuvA(4)-RuvB(12)-RuvC(2) complex forms which resolves the HJ.

It is found in the cytoplasm. The enzyme catalyses ATP + H2O = ADP + phosphate + H(+). Its function is as follows. The RuvA-RuvB-RuvC complex processes Holliday junction (HJ) DNA during genetic recombination and DNA repair, while the RuvA-RuvB complex plays an important role in the rescue of blocked DNA replication forks via replication fork reversal (RFR). RuvA specifically binds to HJ cruciform DNA, conferring on it an open structure. The RuvB hexamer acts as an ATP-dependent pump, pulling dsDNA into and through the RuvAB complex. RuvB forms 2 homohexamers on either side of HJ DNA bound by 1 or 2 RuvA tetramers; 4 subunits per hexamer contact DNA at a time. Coordinated motions by a converter formed by DNA-disengaged RuvB subunits stimulates ATP hydrolysis and nucleotide exchange. Immobilization of the converter enables RuvB to convert the ATP-contained energy into a lever motion, pulling 2 nucleotides of DNA out of the RuvA tetramer per ATP hydrolyzed, thus driving DNA branch migration. The RuvB motors rotate together with the DNA substrate, which together with the progressing nucleotide cycle form the mechanistic basis for DNA recombination by continuous HJ branch migration. Branch migration allows RuvC to scan DNA until it finds its consensus sequence, where it cleaves and resolves cruciform DNA. The sequence is that of Holliday junction branch migration complex subunit RuvB from Paracoccus denitrificans (strain Pd 1222).